Reading from the N-terminus, the 212-residue chain is Leucyl/phenylalanyl-tRNA--protein transferase (212 aa).

The protein belongs to the L/F-transferase family.

The protein resides in the cytoplasm. It catalyses the reaction N-terminal L-lysyl-[protein] + L-leucyl-tRNA(Leu) = N-terminal L-leucyl-L-lysyl-[protein] + tRNA(Leu) + H(+). The catalysed reaction is N-terminal L-arginyl-[protein] + L-leucyl-tRNA(Leu) = N-terminal L-leucyl-L-arginyl-[protein] + tRNA(Leu) + H(+). The enzyme catalyses L-phenylalanyl-tRNA(Phe) + an N-terminal L-alpha-aminoacyl-[protein] = an N-terminal L-phenylalanyl-L-alpha-aminoacyl-[protein] + tRNA(Phe). In terms of biological role, functions in the N-end rule pathway of protein degradation where it conjugates Leu, Phe and, less efficiently, Met from aminoacyl-tRNAs to the N-termini of proteins containing an N-terminal arginine or lysine. This Paracoccus denitrificans (strain Pd 1222) protein is Leucyl/phenylalanyl-tRNA--protein transferase.